A 290-amino-acid polypeptide reads, in one-letter code: 33 kDa chaperonin (290 aa).

Intrachain disulfides connect cysteine 236–cysteine 238 and cysteine 269–cysteine 272.

The protein belongs to the HSP33 family. Post-translationally, under oxidizing conditions two disulfide bonds are formed involving the reactive cysteines. Under reducing conditions zinc is bound to the reactive cysteines and the protein is inactive.

It localises to the cytoplasm. Its function is as follows. Redox regulated molecular chaperone. Protects both thermally unfolding and oxidatively damaged proteins from irreversible aggregation. Plays an important role in the bacterial defense system toward oxidative stress. The sequence is that of 33 kDa chaperonin from Acholeplasma laidlawii (strain PG-8A).